The chain runs to 484 residues: Arginine ADP-riboxanase OspC2 (484 aa).

Positions 143, 144, 145, 149, 162, 172, 188, 206, 211, 231, and 326 each coordinate NAD(+). Glu326 is a catalytic residue. 2 ANK repeats span residues 414-444 (LYDV…DVNK) and 451-480 (SGDT…VSGK).

It belongs to the OspC family.

It is found in the secreted. It carries out the reaction L-arginyl-[protein] + NAD(+) = ADP-riboxanated L-argininyl-[protein] + nicotinamide + NH4(+) + H(+). ADP-riboxanase effector that mediates arginine ADP-riboxanation of host caspases. ADP-riboxanation of host apoptotic caspases (CASP3 and CASP9) prevents their activation, thereby inhibiting host cell extrinsic and intrinsic apoptosis. Does not catalyze ADP-riboxanation of host CASP4/CASP11 or CASP8. In contrast to Ospc1 and OspC3, not able to inactivate host calmodulin. This is Arginine ADP-riboxanase OspC2 from Shigella flexneri.